The following is a 197-amino-acid chain: MSDVDTKIELATDSAMDITSPENDNNKTTATATSSSETQTTEDILKTETQKQKDDFYLRYYVGHKGKYGHEFLEFEFRSGNKLRYANNSHYKSENLIRKEVCVSDGVISEIKKVILDSGIMLEDDKNWPEPDVVGKQELEIVFKDEHISFSTTKIGSLMDVEKSDDPEGLKVMFYLIQDLKCLVFSLIGLHFKIKPI.

The span at 1 to 10 (MSDVDTKIEL) shows a compositional bias: basic and acidic residues. A disordered region spans residues 1–43 (MSDVDTKIELATDSAMDITSPENDNNKTTATATSSSETQTTED). Residues 28–42 (TTATATSSSETQTTE) show a composition bias toward low complexity.

This sequence belongs to the mago nashi family.

Its subcellular location is the nucleus. The polypeptide is Protein mago nashi homolog (magoh) (Dictyostelium discoideum (Social amoeba)).